Here is a 101-residue protein sequence, read N- to C-terminus: Small ribosomal subunit protein bS18c (101 aa).

It belongs to the bacterial ribosomal protein bS18 family. Part of the 30S ribosomal subunit.

It localises to the plastid. The protein resides in the chloroplast. The polypeptide is Small ribosomal subunit protein bS18c (Carica papaya (Papaya)).